An 870-amino-acid chain; its full sequence is Suppressor of yeast profilin deletion (870 aa).

The span at 252–267 shows a compositional bias: polar residues; sequence SSSSKEVVPNNASPAS. 2 disordered regions span residues 252–298 and 310–574; these read SSSS…RKSA and SSSL…TLSS. K256 participates in a covalent cross-link: Glycyl lysine isopeptide (Lys-Gly) (interchain with G-Cter in ubiquitin). S264 is subject to Phosphoserine. Residues 283 to 292 are compositionally biased toward basic and acidic residues; it reads TEREKKSPQK. A compositionally biased stretch (polar residues) spans 310–323; sequence SSSLTHNDLMNNEF. At S331 the chain carries Phosphoserine. The segment covering 333-342 has biased composition (basic residues); that stretch reads KSKKSSHTLR. A compositionally biased stretch (polar residues) spans 367–378; the sequence is HIQASITETPNN. Residues 379 to 390 show a composition bias toward low complexity; it reads SSTRVSSTATSS. Polar residues predominate over residues 398–409; that stretch reads PTYSSSKSNNWT. Phosphothreonine is present on T416. Residues 473–485 show a composition bias toward low complexity; it reads PISISQPPLQPQS. A phosphoserine mark is found at S496 and S500. Over residues 497-514 the composition is skewed to polar residues; it reads PSISLPTATVDNQPSGQV. Residue T577 is modified to Phosphothreonine. An MHD domain is found at 609–869; the sequence is QFGLNASIAE…TLTTGNYHGL (261 aa).

This sequence belongs to the SYP1 family. As to quaternary structure, interacts with CDC3, CDC10, CDC11, CDC12, EDE1 and EPS15.

It localises to the bud neck. Its function is as follows. Multi-functional protein that contributes to the endocytic process, but also to events that occur at the neck during budding and/or cytokinesis. Plays a role as an endocytic adapters with membrane-tubulation activity that associates with transmembrane cargo proteins and initiates the formation of endocytic sites. Contributes to the stabilization of the nascent clathrin-coated pit. Also plays a role in late endocytosis by mediating vesiculation. Involved in the regulation of cell cycle-dependent dynamics of the septin cytoskeleton by promoting septin turnover in different cell cycle stages. May act through the RHO2 signaling pathway to repolarize cortical actin patches in profilin-deficient cells. This chain is Suppressor of yeast profilin deletion (SYP1), found in Saccharomyces cerevisiae (strain ATCC 204508 / S288c) (Baker's yeast).